The chain runs to 294 residues: MSCNNGMSFFPSNFMIQTSYEDDHPHQSPSLAPLLPSCSLPQDLHGFASFLGKRSPMEGCCDLETGNNMNGEEDYSDDGSQMGEKKRRLNMEQVKTLEKNFELGNKLEPERKMQLARALGLQPRQIAIWFQNRRARWKTKQLEKDYDTLKRQFDTLKAENDLLQTHNQKLQAEIMGLKNREQTESINLNKETEGSCSNRSDNSSDNLRLDISTAPPSNDSTLTGGHPPPPQTVGRHFFPPSPATATTTTTTMQFFQNSSSGQSMVKEENSISNMFCAMDDHSGFWPWLDQQQYN.

The homeobox DNA-binding region spans 82–141 (MGEKKRRLNMEQVKTLEKNFELGNKLEPERKMQLARALGLQPRQIAIWFQNRRARWKTKQ). The segment at 142–177 (LEKDYDTLKRQFDTLKAENDLLQTHNQKLQAEIMGL) is leucine-zipper. Residues 181-246 (EQTESINLNK…FFPPSPATAT (66 aa)) are disordered. Residues 197-210 (SNRSDNSSDNLRLD) show a composition bias toward low complexity. Residues 214 to 223 (APPSNDSTLT) are compositionally biased toward polar residues.

The protein belongs to the HD-ZIP homeobox family. Class I subfamily. Predominantly expressed in leaves and flowers.

It localises to the nucleus. In terms of biological role, probable transcription factor that may act in the sucrose-signaling pathway. The polypeptide is Homeobox-leucine zipper protein ATHB-13 (ATHB-13) (Arabidopsis thaliana (Mouse-ear cress)).